The following is a 187-amino-acid chain: Threonylcarbamoyl-AMP synthase (187 aa).

Residues 3 to 187 enclose the YrdC-like domain; that stretch reads QVLPADAAEL…ARSGTVIREG (185 aa).

It belongs to the SUA5 family. TsaC subfamily.

The protein localises to the cytoplasm. It carries out the reaction L-threonine + hydrogencarbonate + ATP = L-threonylcarbamoyladenylate + diphosphate + H2O. Required for the formation of a threonylcarbamoyl group on adenosine at position 37 (t(6)A37) in tRNAs that read codons beginning with adenine. Catalyzes the conversion of L-threonine, HCO(3)(-)/CO(2) and ATP to give threonylcarbamoyl-AMP (TC-AMP) as the acyladenylate intermediate, with the release of diphosphate. This is Threonylcarbamoyl-AMP synthase from Shewanella pealeana (strain ATCC 700345 / ANG-SQ1).